The sequence spans 281 residues: Undecaprenyl-diphosphatase 1 (281 aa).

The next 6 membrane-spanning stretches (helical) occupy residues 95-115 (WMVIAGTIPVGLAGVLLKDLI), 119-139 (FRNLWITATVLILFSLVFILA), 152-172 (LTMKDAVLMGLWQCLALIPGV), 195-215 (FSFLLAIPAVLASGLFSLPDA), 227-247 (LQLLVGSGIGFVVGYISIAWL), and 256-276 (FAWFAAYRIPLGLLVMALLGT).

The protein belongs to the UppP family.

The protein localises to the cell membrane. The catalysed reaction is di-trans,octa-cis-undecaprenyl diphosphate + H2O = di-trans,octa-cis-undecaprenyl phosphate + phosphate + H(+). In terms of biological role, catalyzes the dephosphorylation of undecaprenyl diphosphate (UPP). Confers resistance to bacitracin. This Corynebacterium jeikeium (strain K411) protein is Undecaprenyl-diphosphatase 1.